The chain runs to 374 residues: UPF0754 membrane protein NWMN_1738 (374 aa).

The next 2 membrane-spanning stretches (helical) occupy residues 4–24 and 354–374; these read LFIIIFMIVVGAIIGGITNVI and SLGFILGGIIGFFQGLVAIFV.

Belongs to the UPF0754 family.

It localises to the cell membrane. The sequence is that of UPF0754 membrane protein NWMN_1738 from Staphylococcus aureus (strain Newman).